Reading from the N-terminus, the 259-residue chain is Adenosylcobinamide-GDP ribazoletransferase (259 aa).

A run of 6 helical transmembrane segments spans residues asparagine 9–valine 29, leucine 43–valine 63, serine 64–histidine 84, alanine 118–phenylalanine 138, valine 143–phenylalanine 163, and isoleucine 190–leucine 210.

This sequence belongs to the CobS family. Requires Mg(2+) as cofactor.

The protein resides in the cell inner membrane. It catalyses the reaction alpha-ribazole + adenosylcob(III)inamide-GDP = adenosylcob(III)alamin + GMP + H(+). It carries out the reaction alpha-ribazole 5'-phosphate + adenosylcob(III)inamide-GDP = adenosylcob(III)alamin 5'-phosphate + GMP + H(+). It functions in the pathway cofactor biosynthesis; adenosylcobalamin biosynthesis; adenosylcobalamin from cob(II)yrinate a,c-diamide: step 7/7. Its function is as follows. Joins adenosylcobinamide-GDP and alpha-ribazole to generate adenosylcobalamin (Ado-cobalamin). Also synthesizes adenosylcobalamin 5'-phosphate from adenosylcobinamide-GDP and alpha-ribazole 5'-phosphate. The protein is Adenosylcobinamide-GDP ribazoletransferase of Shewanella pealeana (strain ATCC 700345 / ANG-SQ1).